The sequence spans 60 residues: Conotoxin Cal6.20 (60 aa).

The N-terminal stretch at methionine 1–alanine 22 is a signal peptide. 3 cysteine pairs are disulfide-bonded: cysteine 32/cysteine 42, cysteine 35/cysteine 48, and cysteine 41/cysteine 55.

This sequence belongs to the conotoxin O1 superfamily. In terms of tissue distribution, expressed by the venom duct.

The protein localises to the secreted. Functionally, probable neurotoxin. This chain is Conotoxin Cal6.20, found in Californiconus californicus (California cone).